Reading from the N-terminus, the 906-residue chain is Protein translocase subunit SecA (906 aa).

ATP contacts are provided by residues Gln86, 104–108, and Asp499; that span reads GEGKT. The segment covering 834-847 has biased composition (basic and acidic residues); it reads KLQKNMRESREDPA. Residues 834–887 form a disordered region; sequence KLQKNMRESREDPAFSKYNAGSSLETDLKPVVSRVDPKDRNPDDPTSWGRVSRN. Residues Cys890, Cys892, Cys901, and His902 each coordinate Zn(2+).

The protein belongs to the SecA family. Monomer and homodimer. Part of the essential Sec protein translocation apparatus which comprises SecA, SecYEG and auxiliary proteins SecDF-YajC and YidC. Zn(2+) is required as a cofactor.

It is found in the cell inner membrane. The protein resides in the cytoplasm. It catalyses the reaction ATP + H2O + cellular proteinSide 1 = ADP + phosphate + cellular proteinSide 2.. Part of the Sec protein translocase complex. Interacts with the SecYEG preprotein conducting channel. Has a central role in coupling the hydrolysis of ATP to the transfer of proteins into and across the cell membrane, serving both as a receptor for the preprotein-SecB complex and as an ATP-driven molecular motor driving the stepwise translocation of polypeptide chains across the membrane. This chain is Protein translocase subunit SecA, found in Rickettsia felis (strain ATCC VR-1525 / URRWXCal2) (Rickettsia azadi).